Consider the following 361-residue polypeptide: Uroporphyrinogen decarboxylase (361 aa).

Substrate is bound by residues 27–31 (RQAGR), Asp-77, Tyr-154, Thr-209, and His-327.

The protein belongs to the uroporphyrinogen decarboxylase family. In terms of assembly, homodimer.

Its subcellular location is the cytoplasm. It carries out the reaction uroporphyrinogen III + 4 H(+) = coproporphyrinogen III + 4 CO2. It functions in the pathway porphyrin-containing compound metabolism; protoporphyrin-IX biosynthesis; coproporphyrinogen-III from 5-aminolevulinate: step 4/4. In terms of biological role, catalyzes the decarboxylation of four acetate groups of uroporphyrinogen-III to yield coproporphyrinogen-III. In Coxiella burnetii (strain RSA 331 / Henzerling II), this protein is Uroporphyrinogen decarboxylase.